A 379-amino-acid chain; its full sequence is MDLGKPMKNVLVVALLVIFQVCLCQDEVTDNYIGDNTTVDYTLYESVCFKKDVRNFKAWFLPIMYSIICFVGLLGNGLVMLTYIYFKRLKTMTDTYLLNLALADILFLLTLPFWAYSAAKSWVFGVHVCKLIFGIYKISFFSGMLLLLCISIDRYVAIVQAVSAHRHRARVLLISKLSCLGIWMLAIVLSTPEVMYSGIQKSSSEQALRCSLVTEHVEALITIQVAQMVVGFLIPLMAMSFCYLVIIRTLLQARNFERNKAIKVIIAVVVVFVAFQLPYNGVVLAHTVANFNITSGTSCELSKQLNIAYDVTYSLACVRCCVNPFLYAFIGVKFRSDLFKLFKDLGCLSQEQLRQWSFCRHTRRSSMSVEAETTTTFSP.

The N-terminal stretch at 1–24 is a signal peptide; that stretch reads MDLGKPMKNVLVVALLVIFQVCLC. Residues 25-59 are Extracellular-facing; it reads QDEVTDNYIGDNTTVDYTLYESVCFKKDVRNFKAW. Residue N36 is glycosylated (N-linked (GlcNAc...) asparagine). A helical transmembrane segment spans residues 60–86; sequence FLPIMYSIICFVGLLGNGLVMLTYIYF. The Cytoplasmic portion of the chain corresponds to 87 to 95; it reads KRLKTMTDT. A helical transmembrane segment spans residues 96 to 116; it reads YLLNLALADILFLLTLPFWAY. Over 117–130 the chain is Extracellular; it reads SAAKSWVFGVHVCK. C129 and C210 form a disulfide bridge. The chain crosses the membrane as a helical span at residues 131–152; it reads LIFGIYKISFFSGMLLLLCISI. The Cytoplasmic portion of the chain corresponds to 153 to 170; that stretch reads DRYVAIVQAVSAHRHRAR. The helical transmembrane segment at 171–191 threads the bilayer; it reads VLLISKLSCLGIWMLAIVLST. Residues 192–219 are Extracellular-facing; that stretch reads PEVMYSGIQKSSSEQALRCSLVTEHVEA. The chain crosses the membrane as a helical span at residues 220–247; that stretch reads LITIQVAQMVVGFLIPLMAMSFCYLVII. The Cytoplasmic portion of the chain corresponds to 248–263; it reads RTLLQARNFERNKAIK. Residues 264–289 form a helical membrane-spanning segment; the sequence is VIIAVVVVFVAFQLPYNGVVLAHTVA. Residues 290–314 are Extracellular-facing; sequence NFNITSGTSCELSKQLNIAYDVTYS. The N-linked (GlcNAc...) asparagine glycan is linked to N292. Residues 315-332 traverse the membrane as a helical segment; sequence LACVRCCVNPFLYAFIGV. Over 333–379 the chain is Cytoplasmic; sequence KFRSDLFKLFKDLGCLSQEQLRQWSFCRHTRRSSMSVEAETTTTFSP.

The protein belongs to the G-protein coupled receptor 1 family.

The protein resides in the cell membrane. Functionally, receptor for the MIP-3-beta chemokine. The chain is C-C chemokine receptor type 7 (CCR7) from Bos taurus (Bovine).